A 259-amino-acid chain; its full sequence is uncharacterized protein (259 aa).

This sequence to M.thermoautotrophicum MTH738.

This is an uncharacterized protein from Methanocaldococcus jannaschii (strain ATCC 43067 / DSM 2661 / JAL-1 / JCM 10045 / NBRC 100440) (Methanococcus jannaschii).